Consider the following 335-residue polypeptide: Proline racemase (335 aa).

C91 acts as the Proton acceptor in catalysis. The active-site Proton donor is C255.

It belongs to the proline racemase family. Homodimer.

It carries out the reaction L-proline = D-proline. Catalyzes the reversible interconversion of L- and D-proline. Plays an important role in the regulation of intra- and extracellular amino acid pools, allowing the bacterium to profit from host precursors and enzymatic pathways. Strong B-cell mitogen. In Clostridioides difficile (strain 630) (Peptoclostridium difficile), this protein is Proline racemase.